The chain runs to 194 residues: ATP-dependent Clp protease proteolytic subunit 1 (194 aa).

Residue serine 98 is the Nucleophile of the active site. Histidine 123 is a catalytic residue.

Belongs to the peptidase S14 family. In terms of assembly, fourteen ClpP subunits assemble into 2 heptameric rings which stack back to back to give a disk-like structure with a central cavity, resembling the structure of eukaryotic proteasomes.

The protein resides in the cytoplasm. It carries out the reaction Hydrolysis of proteins to small peptides in the presence of ATP and magnesium. alpha-casein is the usual test substrate. In the absence of ATP, only oligopeptides shorter than five residues are hydrolyzed (such as succinyl-Leu-Tyr-|-NHMec, and Leu-Tyr-Leu-|-Tyr-Trp, in which cleavage of the -Tyr-|-Leu- and -Tyr-|-Trp bonds also occurs).. Functionally, cleaves peptides in various proteins in a process that requires ATP hydrolysis. Has a chymotrypsin-like activity. Plays a major role in the degradation of misfolded proteins. ClpXP1 is involved in the complete degradation of the Site-2 clipped anti-sigma-W factor RsiW. This results in the release of SigW and the transcription activation of the genes under the control of the sigma-W factor. This Halalkalibacterium halodurans (strain ATCC BAA-125 / DSM 18197 / FERM 7344 / JCM 9153 / C-125) (Bacillus halodurans) protein is ATP-dependent Clp protease proteolytic subunit 1.